Reading from the N-terminus, the 3141-residue chain is MSTIVFGSFTCHLDAAIHQDNADRLAKAWTRPENRQVSNVHLLCRRAAKSLINTYESATASAWKGLEEKLQPMFAKREFSKTVTKRKGLRCFKESSEKFIEKKLRKQYQEERERFQFVNGPDAIVNQISVDKCEASVWVPFPHIIEKPSFATPSMKKKVVFTKVRMSEASLQLFMRRVAANAKANGQKVEIIGRKRVVGNYTTKSRLTYFRTHVRHLDGSKPRYDLVLDEATKKILQLFANTSRFHHVHKKGEVTPGMSGFVVNPINLSDPMQVYDTDLFIVRGKHNSILVDSRCKVSKKQSNEIIHYSDPGKQFSDGFTNSFMQCKLRETDHQSTSDLDVKECGDVAALVCQAIIPCGKITCLQCAQKYSYMSQQEIRDRFSTVIEQHEKTAMDNYPQFSHVLAFLKRYRELMRVENQNYEAFKDITHMIGEDRKEAPFSHLQQINELIIKGGMMSAQDYIEASDHLRELARYQKNRTENIRSGSIKAFRNKISSKAHVNMQLMCDNQLDTNGNFVWGQREYHAKRFFRNYFDVIDVSEGYRRHIVRENPRGIRKLAIGNLVISTNLAALRKQLLGEECIHFEVSKECTSRRGENFVYQCCCVTHEDGTPLESEIISPTKNHLVVGNTGDSKYVDLPTAKGGAMFIAKAGYCYINIFLAMLININEDEAKSFTKTVRDTLVPKLGTWPSMMDLATACHFLAVLYPETRNAELPRILVDHEAKIFHVVDSFGSLSTGMHVLKANTINQLISFASDTLDSNMKTYLVGGSEVDKCDEFKNVKLLIRSIYKPQIMEQVLKEEPYLLLMSVLSPGVLMALFNSGSLEKATQYWITRSHTLAAITSMLSALAAKVSLASTLNAQMSVIDEHAAVLCDSVFDGTKPYASYMMAVKTLERMKARTESDHTLNDLGFSVLRQATPHLVEKSYLQELEQAWKELSWSEKFSAILESQRWRKHIPKPFIPKDGADLGGRYDISVRSLLGNQYKRLRDVVRRKRDDVVCYTHQSMGKLFCKAIGISTSFLPSTLKMLDMLIVFGLLLSIGATCNSMINEHKHLKQLAADREDKKRFKRLQVLHTRLSEKVGCTPTADEFLEYVGGENPDLLKHAEDLIGDGQVVVHQSKRDSQANLERVVAFVALVMMLFDSERSDGVYKILNKLKGIMGSVDQAVHHQSLDDIEDILDEKKLTVDFVLQSNEVAPTVPFDSTFEKWWTNQLETGNVIPHYRTEGHFLEFTRENAAHIANEVMHGSHQDILIRGAVGSGKSTGLPFHLSKKGHVLLIEPTRPLAENVCKQLRGQPFNVNPTLRMRGMSTFGSTPITVMTSGYALHFLANNPTYLDNYKCIIFDECHVHDASAMAFRCLLSEYSYPGKILKVSATPPGHEVDFKTQKEVKVIVEESLSFQQFVSNLGTGCNSDILKHGVNVLVYVASYNEVDTLSKLLTDRSFKVSKVDGRTMKIGNVEIPTSGTQAKPHFVVATNIIENGVTLDIDVVVDFGLKVVPVLDIDNRLVRYTKKSISYGERIQRLGRVGRNKPGAALRIGFTEKGLTQIPPIIATEAAFLCFTYGLPVMTNGVSTSLLAMCTVKQARTMQQFELSPFYTVALVRFDGTMHQEIFRLLKSYRLRDSEVILNKLAIPNSNVCGWMSVRDYKRQGCNLDLDENIRVPFYVKDIPETLHERIWQVVETHKSDAGFGRICSSSACKIAYTLQTDIHSIPRTIKIIDALLEQERTKQAHFRAMTSQSCSSSNFSLSSITSAIRSKYAKDHTEENIGVLQMAKSQLLEFKNLNIDPSYPELVRNFGALECVHHQTKEGVSKALQLKGHWNKRLITRDATLMLGVLGGGAWMIFSYLRDSFKEGVVHQGFNRRQRQKLKFRQARDNRMAREVYGDDSTMEDYFGSAYSKKGKSKGKTRGMGTKTRKFVNMYGYDPTDYNFVRFVDPLTGHTLDEDPLMDINLVQEHFSQIRNDYIGDDKITMQHIMSNPGIVAYYIKDATQKALKVDLTPHNPLRVCDKTATIAGFPEREFELRQTGHPIFVEPNAIPKINEEGDEEVDHESKSLFRGLRDYNPIASSICQLNNSSGARQSEMFGLGFGGLIVTNQHLFKRNDGELTIRSHHGEFVVKDTKTLKLLPCKGRDIVIIRLPKDFPPFPKRLQFRTPTTEDRVCLIGSNFQTKSISSTMSETSATYPVDNSHFWKHWISTKDGHCGLPIVSTRDGSILGLHSLANSTNTQNFYAAFPDNFETTYLSNQDNDNWIKQWRYNPDEVCWGSLQLKRDIPQSPFTICKLLTDLDGEFVYTQSKTTHWLRDRLEGNLKAVGACPGQLVTKHVVKGKCTLFETYLLTHPEEHEFFRPLMGAYQKSALNKDAYVKDLMKYSKPIVVGAVDCDQFERAVDVVISMLISKGFEECNYVTDPDDIFSALNMKAAVGALYSGKKRDYFKNVSDQDKESFVRASCKRLFMGKKGVWNGSLKAELRPKEKVEANKTRSFTAAPIDTLLGGKVCVDDFNNQFYSLNLHCPWSVGMTKFRGGWDKLLRALPEGWIYCDADGSQFDSSLSPYLINAVLNIRLAFMEEWDIGEQMLSNLYTEIVYTPIATPDGTIVKKFKGNNSGQPSTVVDNTLMVILAMTYSLLKLGYHPDTHDCICRYFVNGDDLVLAVHPAYESIYDELQEHFSQLGLNYTFATKTENKEELWFMSHKGVLYDDMYIPKLEPERIVSILEWDRSNEPIHRLEAICASMVEAWGYKELLREIRKFYSWVLEQAPYNALSKDGKAPYIAETALKKLYTDTEASETEIERYLEAFYDDINDDGESNVVVHQADEREDEEEVDAGKPIVVTAPAATSPILQPPPVIQPAPRTTAPMLNPIFTPATTQPATKPVSQVPGPQLQTFGTYGNEDASPSNSNALVNTNRDRDVDAGSIGTFTVPRLKAMTSKLSLPKVKGKAIMNLNHLAHYSPAQVDLSNTRAPQSCFQTWYEGVKRDYDVTDDEMSIILNGLMVWCIENGTSPNINGMWVMMDGETQVEYPIKPLLDHAKPTFRQIMAHFSNVAEAYIEKRNYEKAYMPRYGIQRNLTDYSLARYAFDFYEMTSTTPVRAREAHIQMKAAALRNVQNRLFGLDGNVGTQEEDTERHTAGDVNRNMHNLLGVRGV.

Positions 165 to 308 constitute a Peptidase S30 domain; it reads RMSEASLQLF…KKQSNEIIHY (144 aa). Catalysis depends on for P1 proteinase activity residues H216, D225, and S259. An Involved in interaction with stylet and aphid transmission motif is present at residues 360 to 363; it reads KITC. An Involved in virions binding and aphid transmission motif is present at residues 619-621; the sequence is PTK. One can recognise a Peptidase C6 domain in the interval 645-767; that stretch reads MFIAKAGYCY…DSNMKTYLVG (123 aa). Active-site for helper component proteinase activity residues include C653 and H726. The region spanning 1241–1393 is the Helicase ATP-binding domain; the sequence is EVMHGSHQDI…TQKEVKVIVE (153 aa). 1254 to 1261 lines the ATP pocket; the sequence is GAVGSGKS. A DECH box motif is present at residues 1343 to 1346; the sequence is DECH. Residues 1412–1571 enclose the Helicase C-terminal domain; the sequence is DILKHGVNVL…GLPVMTNGVS (160 aa). The short motif at 1898–1905 is the Nuclear localization signal element; sequence KKGKSKGK. Residue Y1920 is modified to O-(5'-phospho-RNA)-tyrosine. Positions 2051-2269 constitute a Peptidase C4 domain; the sequence is SKSLFRGLRD…VCWGSLQLKR (219 aa). Residues H2096, D2131, and C2201 each act as for nuclear inclusion protein A activity in the active site. The RdRp catalytic domain occupies 2535–2659; that stretch reads WIYCDADGSQ…AVHPAYESIY (125 aa). Phosphoserine is present on residues S2836, S2892, S2912, and S2929. Phosphothreonine is present on residues T3065 and T3124.

Belongs to the potyviridae genome polyprotein family. In terms of assembly, interacts with host eIF4E protein (via cap-binding region); this interaction mediates the translation of the VPg-viral RNA conjugates. Part of a complex that comprises VPg, RNA, host EIF4E and EIF4G; this interaction mediates the translation of the VPg-viral RNA conjugates. Interacts with host eIF(iso)4E both in host nucleus and cytoplasm. VPg is uridylylated by the polymerase and is covalently attached to the 5'-end of the genomic RNA. This uridylylated form acts as a nucleotide-peptide primer for the polymerase. Post-translationally, potyviral RNA is expressed as two polyproteins which undergo post-translational proteolytic processing. Genome polyprotein is processed by NIa-pro, P1 and HC-pro proteinases resulting in the production of at least ten individual proteins. P3N-PIPO polyprotein is cleaved by P1 and HC-pro proteinases resulting in the production of three individual proteins. The P1 proteinase and the HC-pro cleave only their respective C-termini autocatalytically. 6K1 is essential for proper proteolytic separation of P3 from CI.

The protein resides in the host cytoplasmic vesicle. It is found in the host nucleus. Its subcellular location is the host cytoplasm. It localises to the virion. It catalyses the reaction RNA(n) + a ribonucleoside 5'-triphosphate = RNA(n+1) + diphosphate. The enzyme catalyses Hydrolyzes glutaminyl bonds, and activity is further restricted by preferences for the amino acids in P6 - P1' that vary with the species of potyvirus, e.g. Glu-Xaa-Xaa-Tyr-Xaa-Gln-|-(Ser or Gly) for the enzyme from tobacco etch virus. The natural substrate is the viral polyprotein, but other proteins and oligopeptides containing the appropriate consensus sequence are also cleaved.. The catalysed reaction is Hydrolyzes a Gly-|-Gly bond at its own C-terminus, commonly in the sequence -Tyr-Xaa-Val-Gly-|-Gly, in the processing of the potyviral polyprotein.. Functionally, required for aphid transmission and also has proteolytic activity. Only cleaves a Gly-Gly dipeptide at its own C-terminus. Interacts with virions and aphid stylets. Acts as a suppressor of RNA-mediated gene silencing, also known as post-transcriptional gene silencing (PTGS), a mechanism of plant viral defense that limits the accumulation of viral RNAs. May have RNA-binding activity. Its function is as follows. Has helicase activity. It may be involved in replication. Indispensable for virus replication. Reduces the abundance of host transcripts related to jasmonic acid biosynthesis therefore altering the host defenses. In order to increase its own stability, decreases host protein degradation pathways. In terms of biological role, indispensable for virus replication. Functionally, mediates the cap-independent, EIF4E-dependent translation of viral genomic RNAs. Binds to the cap-binding site of host EIF4E and thus interferes with the host EIF4E-dependent mRNA export and translation. VPg-RNA directly binds EIF4E and is a template for transcription. Also forms trimeric complexes with EIF4E-EIF4G, which are templates for translation. Its function is as follows. Has RNA-binding and proteolytic activities. An RNA-dependent RNA polymerase that plays an essential role in the virus replication. In terms of biological role, involved in aphid transmission, cell-to-cell and systemis movement, encapsidation of the viral RNA and in the regulation of viral RNA amplification. In Plum pox potyvirus (strain D) (PPV), this protein is Genome polyprotein.